We begin with the raw amino-acid sequence, 161 residues long: Glycine/sarcosine/betaine reductase complex component A2 (161 aa).

Sec-42 is an active-site residue. Sec-42 is a non-standard amino acid (selenocysteine).

It belongs to the GrdA family. As to quaternary structure, monomer. Component of the glycine, sarcosine and betaine reductase complexes, together with components B and C.

The enzyme catalyses acetyl phosphate + [thioredoxin]-disulfide + NH4(+) + H2O = [thioredoxin]-dithiol + glycine + phosphate + H(+). It carries out the reaction acetyl phosphate + methylamine + [thioredoxin]-disulfide + H2O = sarcosine + [thioredoxin]-dithiol + phosphate + H(+). It catalyses the reaction acetyl phosphate + trimethylamine + [thioredoxin]-disulfide + H2O = glycine betaine + [thioredoxin]-dithiol + phosphate + H(+). Its function is as follows. In the first step of glycine, betaine and sarcosine reductases, the substrate is bound to component PB via a Schiff base intermediate. Then the PB-activated substrate is nucleophilically attacked by the selenol anion of component PA to transform it to a carboxymethylated selenoether and the respective amine. By action of component PC, acetyl phosphate is formed, leaving component PA in its oxidized state. Finally component PA becomes reduced by the thioredoxin system to start a new catalytic cycle of reductive deamination. The sequence is that of Glycine/sarcosine/betaine reductase complex component A2 (grdA2) from Photobacterium profundum (strain SS9).